Consider the following 67-residue polypeptide: Small ribosomal subunit protein eS31 (67 aa).

Residues Cys-31, Cys-34, Cys-49, and Cys-52 each coordinate Zn(2+). The C4-type zinc finger occupies 31-52 (CPKCGAGVFMAEHLNRFACGKC).

This sequence belongs to the eukaryotic ribosomal protein eS31 family. Part of the 30S ribosomal subunit. Requires Zn(2+) as cofactor.

This chain is Small ribosomal subunit protein eS31, found in Methanococcus maripaludis (strain DSM 14266 / JCM 13030 / NBRC 101832 / S2 / LL).